A 460-amino-acid chain; its full sequence is Protein unc-93 homolog A (460 aa).

5 consecutive transmembrane segments (helical) span residues 7–27 (ILIVSFGFLLLFTAFGGLQSL), 41–61 (SLSVIYAALIVSSVFVPPIVI), 68–88 (WTIVASMCCYITYSLGNFYAS), 89–109 (WYTLIPTSLILGFGGAPLWAA), and 139–159 (LFFLIFQSSGVWGNLISSLIF). Asn168 and Asn189 each carry an N-linked (GlcNAc...) asparagine glycan. The next 6 helical transmembrane spans lie at 203–223 (TLLGVYTGSGVLAVILIAVFL), 292–312 (FVGYVMICFAATNAVCSLLFG), 321–341 (ICLFILAAVSNAACVIALLLW), 345–365 (PNDFAVFFIFPAIWGMADAIW), 390–410 (LWESLGFVIAYGYSTFLCVSV), and 412–432 (LYILLAVLLIAIVFYGFVEYL).

Belongs to the unc-93 family.

It is found in the membrane. The protein is Protein unc-93 homolog A (unc93a) of Xenopus laevis (African clawed frog).